The sequence spans 366 residues: MSFNTFGRVFTFTTWGESHGPALGATVDGCPPGVALDEGWIQQFLDRRRPGSSKFTTQRQEPDRVRILSGVFEGRTTGTPIQLMIENTDQRSKDYGEIAQAFRPGHADIAYHLKYGIRDYRGGGRSSARETAARVAAGGVAQAVLRDLVPGLKIAGYMVQMGDLHLDRANFDLAEIGNNPFFLPDAGAVPAWEDYLNAIRKAQDSVGAAVEVLIQGCPPGLGAPVYAKLDTDLAAAMMSINAVKGVEIGEGMAAAALTGTANADEIRMGNEGPRFLSNHAGGILGGISTGQDIVVRFAVKPTSSILTPRRTINRKGEEIELITKGRHDPCVGIRAVPIAEAMAACVVLDHLLLDRAQTGGRRGTIG.

Residue R48 participates in NADP(+) binding. FMN contacts are provided by residues R125 to S127, N241 to A242, G285, K300 to S304, and R326.

It belongs to the chorismate synthase family. In terms of assembly, homotetramer. Requires FMNH2 as cofactor.

It carries out the reaction 5-O-(1-carboxyvinyl)-3-phosphoshikimate = chorismate + phosphate. Its pathway is metabolic intermediate biosynthesis; chorismate biosynthesis; chorismate from D-erythrose 4-phosphate and phosphoenolpyruvate: step 7/7. Catalyzes the anti-1,4-elimination of the C-3 phosphate and the C-6 proR hydrogen from 5-enolpyruvylshikimate-3-phosphate (EPSP) to yield chorismate, which is the branch point compound that serves as the starting substrate for the three terminal pathways of aromatic amino acid biosynthesis. This reaction introduces a second double bond into the aromatic ring system. In Paracoccus denitrificans (strain Pd 1222), this protein is Chorismate synthase.